The primary structure comprises 629 residues: tRNA uridine 5-carboxymethylaminomethyl modification enzyme MnmG (629 aa).

FAD is bound by residues 13–18 (GGGHAG), V125, and S180. 273–287 (GPRYCPSIEDKVMRF) contacts NAD(+). Q370 contacts FAD.

The protein belongs to the MnmG family. In terms of assembly, homodimer. Heterotetramer of two MnmE and two MnmG subunits. The cofactor is FAD.

The protein resides in the cytoplasm. Functionally, NAD-binding protein involved in the addition of a carboxymethylaminomethyl (cmnm) group at the wobble position (U34) of certain tRNAs, forming tRNA-cmnm(5)s(2)U34. This Escherichia coli O127:H6 (strain E2348/69 / EPEC) protein is tRNA uridine 5-carboxymethylaminomethyl modification enzyme MnmG.